The chain runs to 426 residues: Serine--tRNA ligase (426 aa).

Residue 233–235 (TSE) coordinates L-serine. 264–266 (RSE) serves as a coordination point for ATP. Residue glutamate 287 participates in L-serine binding. ATP is bound at residue 351–354 (EISS). An L-serine-binding site is contributed by serine 387.

It belongs to the class-II aminoacyl-tRNA synthetase family. Type-1 seryl-tRNA synthetase subfamily. In terms of assembly, homodimer. The tRNA molecule binds across the dimer.

Its subcellular location is the cytoplasm. The enzyme catalyses tRNA(Ser) + L-serine + ATP = L-seryl-tRNA(Ser) + AMP + diphosphate + H(+). The catalysed reaction is tRNA(Sec) + L-serine + ATP = L-seryl-tRNA(Sec) + AMP + diphosphate + H(+). It functions in the pathway aminoacyl-tRNA biosynthesis; selenocysteinyl-tRNA(Sec) biosynthesis; L-seryl-tRNA(Sec) from L-serine and tRNA(Sec): step 1/1. Functionally, catalyzes the attachment of serine to tRNA(Ser). Is also able to aminoacylate tRNA(Sec) with serine, to form the misacylated tRNA L-seryl-tRNA(Sec), which will be further converted into selenocysteinyl-tRNA(Sec). This is Serine--tRNA ligase from Xylella fastidiosa (strain M23).